Reading from the N-terminus, the 289-residue chain is Phycobilisome 39 kDa linker polypeptide, phycocyanin-associated, rod (289 aa).

Residues 2–180 enclose the PBS-linker domain; the sequence is PITSAASRLG…LYRGYANSDR (179 aa). Residues 213–233 form a disordered region; the sequence is SYLPSKQGTAPSRTFGRSSQG. Residues 216–233 are compositionally biased toward polar residues; sequence PSKQGTAPSRTFGRSSQG. The CpcD-like domain occupies 236-288; that stretch reads PRLYRIEVTGISLPRYPKVRRSNKEFIVPYEQLSSTLQQINKLGGKVASITFA.

This sequence belongs to the phycobilisome linker protein family.

The protein localises to the cellular thylakoid membrane. Its function is as follows. Rod linker protein, associated with phycocyanin. Linker polypeptides determine the state of aggregation and the location of the disk-shaped phycobiliprotein units within the phycobilisome and modulate their spectroscopic properties in order to mediate a directed and optimal energy transfer. This chain is Phycobilisome 39 kDa linker polypeptide, phycocyanin-associated, rod (cpcI2), found in Microchaete diplosiphon (Fremyella diplosiphon).